A 417-amino-acid polypeptide reads, in one-letter code: Tyrosine aminotransferase (417 aa).

Lysine 249 carries the post-translational modification N6-(pyridoxal phosphate)lysine.

It belongs to the class-I pyridoxal-phosphate-dependent aminotransferase family. In terms of assembly, homodimer. Pyridoxal 5'-phosphate is required as a cofactor.

The catalysed reaction is L-tyrosine + 2-oxoglutarate = 3-(4-hydroxyphenyl)pyruvate + L-glutamate. Its pathway is amino-acid degradation; L-phenylalanine degradation; acetoacetate and fumarate from L-phenylalanine: step 2/6. Its function is as follows. Transaminase involved in tyrosine breakdown. Converts tyrosine to p-hydroxyphenylpyruvate. Has much lower affinity and transaminase activity towards phenylalanine. The protein is Tyrosine aminotransferase (tat) of Dictyostelium discoideum (Social amoeba).